Consider the following 298-residue polypeptide: MNNLQTQFPHIAIKLNEPLSKYTYTKTGGAADVFVMPKTIEETQEVVAYCHQNKIPLTILGNGSNLIIKDGGIRGVILHLDLLQTIERNNTQIIAMSGAKLIDTAKFALDESLSGLEFACGIPGSIGGALHMNAGAYGGEISDVLEAATVLTQTGELKKLKRSELKAAYRFSTIAEKNYIVLDATFSLALEEKNLIQAKMDELTAAREAKQPLEYPSCGSVFKRPPGHFAGKLIQDSGLQGHIIGGAQVSLKHAGFIVNIGGATATDYMNLIAYVQQTVREKFDVELETEVKIIGEDK.

The FAD-binding PCMH-type domain occupies 26-191; it reads KTGGAADVFV…LDATFSLALE (166 aa). Arg-170 is an active-site residue. Ser-220 (proton donor) is an active-site residue. Residue Glu-290 is part of the active site.

Belongs to the MurB family. FAD serves as cofactor.

It is found in the cytoplasm. It carries out the reaction UDP-N-acetyl-alpha-D-muramate + NADP(+) = UDP-N-acetyl-3-O-(1-carboxyvinyl)-alpha-D-glucosamine + NADPH + H(+). Its pathway is cell wall biogenesis; peptidoglycan biosynthesis. Its function is as follows. Cell wall formation. The polypeptide is UDP-N-acetylenolpyruvoylglucosamine reductase (Listeria monocytogenes serotype 4b (strain CLIP80459)).